We begin with the raw amino-acid sequence, 422 residues long: Glutamyl-tRNA reductase (422 aa).

Residues 50-53, S110, 115-117, and Q121 each bind substrate; these read TCNR and ETQ. Catalysis depends on C51, which acts as the Nucleophile. 190–195 is an NADP(+) binding site; sequence GAGEMS.

It belongs to the glutamyl-tRNA reductase family. Homodimer.

It carries out the reaction (S)-4-amino-5-oxopentanoate + tRNA(Glu) + NADP(+) = L-glutamyl-tRNA(Glu) + NADPH + H(+). It participates in porphyrin-containing compound metabolism; protoporphyrin-IX biosynthesis; 5-aminolevulinate from L-glutamyl-tRNA(Glu): step 1/2. Its function is as follows. Catalyzes the NADPH-dependent reduction of glutamyl-tRNA(Glu) to glutamate 1-semialdehyde (GSA). The sequence is that of Glutamyl-tRNA reductase from Campylobacter fetus subsp. fetus (strain 82-40).